The primary structure comprises 259 residues: Cobalt-precorrin-4 C(11)-methyltransferase (259 aa).

The protein belongs to the precorrin methyltransferase family.

The catalysed reaction is Co-precorrin-4 + S-adenosyl-L-methionine = Co-precorrin-5A + S-adenosyl-L-homocysteine + H(+). It participates in cofactor biosynthesis; adenosylcobalamin biosynthesis; cob(II)yrinate a,c-diamide from sirohydrochlorin (anaerobic route): step 4/10. Its function is as follows. Catalyzes the methylation of C-11 in cobalt-precorrin-4 to form cobalt-precorrin-5A. This chain is Cobalt-precorrin-4 C(11)-methyltransferase (cbiF), found in Methanocaldococcus jannaschii (strain ATCC 43067 / DSM 2661 / JAL-1 / JCM 10045 / NBRC 100440) (Methanococcus jannaschii).